Here is a 100-residue protein sequence, read N- to C-terminus: Small ribosomal subunit protein uS14c (100 aa).

It belongs to the universal ribosomal protein uS14 family. In terms of assembly, part of the 30S ribosomal subunit.

It localises to the plastid. The protein resides in the chloroplast. Its function is as follows. Binds 16S rRNA, required for the assembly of 30S particles. The protein is Small ribosomal subunit protein uS14c of Lactuca sativa (Garden lettuce).